Reading from the N-terminus, the 802-residue chain is Chromosome alignment-maintaining phosphoprotein 1 (802 aa).

An N-acetylmethionine modification is found at M1. Over residues 88 to 105 (SDKWSEQPKEQPSKDTES) the composition is skewed to basic and acidic residues. Residues 88–475 (SDKWSEQPKE…PDLWKSSFIM (388 aa)) form a disordered region. S108 carries the post-translational modification Phosphoserine. Residues 135–148 (QKTSPSLCPESQAS) show a composition bias toward polar residues. The segment covering 185 to 203 (ERVDPPCELPELEKPERGP) has biased composition (basic and acidic residues). 15 positions are modified to phosphoserine: S204, S207, S234, S237, S243, S252, S254, S265, S272, S276, S298, S309, S334, S345, and S365. The tract at residues 261 to 479 (ARTASPEPRK…KSSFIMESQK (219 aa)) is mediates interaction with MAD2L2. Residues 332–351 (PMSPGPWKPIPSVSPGPWKP) are compositionally biased toward pro residues. Over residues 354-368 (SMSTASWKSSVSSGS) the composition is skewed to low complexity. Residues 369-378 (WKTPPTSPES) show a composition bias toward polar residues. T371 carries the post-translational modification Phosphothreonine. Phosphoserine occurs at positions 375, 394, 405, 416, 421, 425, 432, 434, and 441. The mediates localization to the spindle and the kinetochore and is required for the attachment of spindle microtubules to the kinetochore stretch occupies residues 440-580 (VSPDQRKTSP…EIQLEAVDNA (141 aa)). T447 carries the phosphothreonine modification. A phosphoserine mark is found at S448, S451, and S461. An N6-acetyllysine; alternate modification is found at K479. K479 is covalently cross-linked (Glycyl lysine isopeptide (Lys-Gly) (interchain with G-Cter in SUMO2); alternate). 3 positions are modified to phosphoserine: S497, S502, and S532. K555 participates in a covalent cross-link: Glycyl lysine isopeptide (Lys-Gly) (interchain with G-Cter in SUMO2). The segment at 581-802 (KCDSLAQEGL…LESPLEEQQI (222 aa)) is mediates localization to the chromosome and the spindle and negatively regulates chromosome alignment. T593 carries the post-translational modification Phosphothreonine. Residue K596 forms a Glycyl lysine isopeptide (Lys-Gly) (interchain with G-Cter in SUMO2) linkage. Phosphoserine is present on residues S603, S605, S617, S622, S641, S642, and S643. A disordered region spans residues 603–625 (SPSSKKLKKDSQENSDAELSSSE). K660 is covalently cross-linked (Glycyl lysine isopeptide (Lys-Gly) (interchain with G-Cter in SUMO2)). Position 665 is a phosphoserine (S665). A Glycyl lysine isopeptide (Lys-Gly) (interchain with G-Cter in SUMO2) cross-link involves residue K679. Residue S726 is modified to Phosphoserine. The segment at 728–750 (YKCTICGKAFLLESLLKNHVAAH) adopts a C2H2-type zinc-finger fold.

In terms of assembly, interacts with MAD2L2. Interacts with POGZ, CBX1, CBX3 and CBX5. Phosphorylated by CDK1. Mitotic phosphorylation is required for the attachment of spindle microtubules to the kinetochore.

It is found in the nucleus. The protein resides in the chromosome. It localises to the centromere. The protein localises to the kinetochore. Its subcellular location is the cytoplasm. It is found in the cytoskeleton. The protein resides in the spindle. Its function is as follows. Required for proper alignment of chromosomes at metaphase and their accurate segregation during mitosis. Involved in the maintenance of spindle microtubules attachment to the kinetochore during sister chromatid biorientation. May recruit CENPE and CENPF to the kinetochore. This is Chromosome alignment-maintaining phosphoprotein 1 (Champ1) from Mus musculus (Mouse).